The sequence spans 144 residues: Large ribosomal subunit protein uL22 (144 aa).

The interval 123–144 (ELVKKRTMGHKKEKAKQKQKQQ) is disordered. Residues 125 to 144 (VKKRTMGHKKEKAKQKQKQQ) are compositionally biased toward basic residues.

Belongs to the universal ribosomal protein uL22 family. As to quaternary structure, part of the 50S ribosomal subunit.

Functionally, this protein binds specifically to 23S rRNA; its binding is stimulated by other ribosomal proteins, e.g. L4, L17, and L20. It is important during the early stages of 50S assembly. It makes multiple contacts with different domains of the 23S rRNA in the assembled 50S subunit and ribosome. Its function is as follows. The globular domain of the protein is located near the polypeptide exit tunnel on the outside of the subunit, while an extended beta-hairpin is found that lines the wall of the exit tunnel in the center of the 70S ribosome. This chain is Large ribosomal subunit protein uL22, found in Mycoplasma genitalium (strain ATCC 33530 / DSM 19775 / NCTC 10195 / G37) (Mycoplasmoides genitalium).